A 643-amino-acid polypeptide reads, in one-letter code: Chromosomal replication initiator protein DnaA (643 aa).

Positions 1 to 97 (MADVPADLAA…VDDSAGEPPP (97 aa)) are domain I, interacts with DnaA modulators. The tract at residues 87-303 (TVDDSAGEPP…ASGPGEPTAR (217 aa)) is disordered. The segment at 97 to 302 (PAAPPAQQTP…PASGPGEPTA (206 aa)) is domain II. A compositionally biased stretch (polar residues) spans 195 to 209 (SPSSQDAYGSPSQDY). A compositionally biased stretch (basic and acidic residues) spans 222-269 (QRGDYDTPRAEYEPARPDYDSARPDYESARPEYDQRDPVRRELPEPPA). Residues 291–300 (PAPASGPGEP) show a composition bias toward low complexity. Positions 303–519 (RLNPKYLFDT…GALIRVTAFA (217 aa)) are domain III, AAA+ region. ATP contacts are provided by glycine 347, glycine 349, lysine 350, and threonine 351. The segment at 520–643 (SLNRQPVDLG…TELTNRIKNG (124 aa)) is domain IV, binds dsDNA.

It belongs to the DnaA family. As to quaternary structure, oligomerizes as a right-handed, spiral filament on DNA at oriC.

It is found in the cytoplasm. In terms of biological role, plays an essential role in the initiation and regulation of chromosomal replication. ATP-DnaA binds to the origin of replication (oriC) to initiate formation of the DNA replication initiation complex once per cell cycle. Binds the DnaA box (a 9 base pair repeat at the origin) and separates the double-stranded (ds)DNA. Forms a right-handed helical filament on oriC DNA; dsDNA binds to the exterior of the filament while single-stranded (ss)DNA is stabiized in the filament's interior. The ATP-DnaA-oriC complex binds and stabilizes one strand of the AT-rich DNA unwinding element (DUE), permitting loading of DNA polymerase. After initiation quickly degrades to an ADP-DnaA complex that is not apt for DNA replication. Binds acidic phospholipids. This chain is Chromosomal replication initiator protein DnaA, found in Streptomyces reticuli.